Here is a 293-residue protein sequence, read N- to C-terminus: Small ribosomal subunit protein uS5 (293 aa).

Positions methionine 1–alanine 55 are disordered. Alanine 2 carries the post-translational modification N-acetylalanine. Gly residues predominate over residues alanine 7 to arginine 34. 14 consecutive repeat copies span residues glycine 9–proline 11, glycine 12–proline 14, glycine 15–proline 17, arginine 22–phenylalanine 25, arginine 26–phenylalanine 29, arginine 34–glycine 35, arginine 36–glycine 37, arginine 38–glycine 39, arginine 40–glycine 41, arginine 42–glycine 43, arginine 44–glycine 45, arginine 46–glycine 47, arginine 48–glycine 49, and arginine 51–glycine 52. The interval glycine 9 to proline 17 is 3 X 3 AA tandem repeats of G-G-P. The 2 X 4 AA tandem repeats of R-G-G-F stretch occupies residues arginine 22–phenylalanine 29. Residues arginine 34 to glycine 52 are 9 X 2 AA tandem repeats of R-G. A compositionally biased stretch (basic residues) spans glycine 35–arginine 51. Glycyl lysine isopeptide (Lys-Gly) (interchain with G-Cter in ubiquitin) cross-links involve residues lysine 54 and lysine 58. The 64-residue stretch at leucine 102 to valine 165 folds into the S5 DRBM domain. At threonine 252 the chain carries Phosphothreonine. An N6-acetyllysine modification is found at lysine 263. Serine 264 is subject to Phosphoserine. Threonine 270 is subject to Phosphothreonine. Position 275 is an N6-acetyllysine; alternate (lysine 275). A Glycyl lysine isopeptide (Lys-Gly) (interchain with G-Cter in SUMO1); alternate cross-link involves residue lysine 275. Residue lysine 275 forms a Glycyl lysine isopeptide (Lys-Gly) (interchain with G-Cter in SUMO2); alternate linkage. Residue lysine 275 forms a Glycyl lysine isopeptide (Lys-Gly) (interchain with G-Cter in ubiquitin); alternate linkage. At serine 281 the chain carries Phosphoserine.

It belongs to the universal ribosomal protein uS5 family. Component of the small ribosomal subunit. Interacts with zinc finger protein ZNF277 (via zinc-finger domains); the interaction is direct; the interaction is extra-ribosomal. Interaction with ZNF277 competes with the binding of RPS2 to protein arginine methyltransferase PRMT3. In terms of processing, citrullinated by PADI4 in the Arg/Gly-rich region. Post-translationally, asymmetric arginine dimethylation by PRMT3 occurs at multiple sites in the Arg/Gly-rich region. Monoubiquitinated at Lys-54 and Lys-58 by RNF10 when a ribosome has stalled during translation, leading to its degradation by the proteasome. Deubiquitinated at Lys-54 and Lys-58 by USP10, preventing degradation by the proteasome and promoting 40S ribosome subunit recycling following ribosome dissociation.

The protein resides in the cytoplasm. It localises to the nucleus. The protein localises to the nucleolus. In terms of biological role, component of the ribosome, a large ribonucleoprotein complex responsible for the synthesis of proteins in the cell. The small ribosomal subunit (SSU) binds messenger RNAs (mRNAs) and translates the encoded message by selecting cognate aminoacyl-transfer RNA (tRNA) molecules. The large subunit (LSU) contains the ribosomal catalytic site termed the peptidyl transferase center (PTC), which catalyzes the formation of peptide bonds, thereby polymerizing the amino acids delivered by tRNAs into a polypeptide chain. The nascent polypeptides leave the ribosome through a tunnel in the LSU and interact with protein factors that function in enzymatic processing, targeting, and the membrane insertion of nascent chains at the exit of the ribosomal tunnel. Plays a role in the assembly and function of the 40S ribosomal subunit. Mutations in this protein affects the control of translational fidelity. Involved in nucleolar processing of pre-18S ribosomal RNA and ribosome assembly. This Rattus norvegicus (Rat) protein is Small ribosomal subunit protein uS5 (Rps2).